Consider the following 261-residue polypeptide: Indole-3-glycerol phosphate synthase (261 aa).

This sequence belongs to the TrpC family.

It catalyses the reaction 1-(2-carboxyphenylamino)-1-deoxy-D-ribulose 5-phosphate + H(+) = (1S,2R)-1-C-(indol-3-yl)glycerol 3-phosphate + CO2 + H2O. The protein operates within amino-acid biosynthesis; L-tryptophan biosynthesis; L-tryptophan from chorismate: step 4/5. In Burkholderia vietnamiensis (strain G4 / LMG 22486) (Burkholderia cepacia (strain R1808)), this protein is Indole-3-glycerol phosphate synthase.